The primary structure comprises 305 residues: Protoheme IX farnesyltransferase (305 aa).

9 helical membrane passes run 31–51 (IQVLLLITTAGAMWIAGKGHV), 53–73 (PLLLLVTLLGGTLAASSANAF), 98–118 (ILPWQAALFATALGVASFAVL), 124–144 (LFAALLAISGIGFYVVIYTLW), 153–173 (IVIGGAAGAIPPLVGWAAVTG), 181–201 (VLFGIIFMWTPPHFWALAMMI), 221–241 (ATARQIFIYTLVLVPVTLVLY), 242–262 (PLGTMGWIYLLAAGALGLWLI), and 285–305 (SIFYLMLLFVAMGIDSIFLFA).

It belongs to the UbiA prenyltransferase family. Protoheme IX farnesyltransferase subfamily.

Its subcellular location is the cell inner membrane. The enzyme catalyses heme b + (2E,6E)-farnesyl diphosphate + H2O = Fe(II)-heme o + diphosphate. It participates in porphyrin-containing compound metabolism; heme O biosynthesis; heme O from protoheme: step 1/1. Functionally, converts heme B (protoheme IX) to heme O by substitution of the vinyl group on carbon 2 of heme B porphyrin ring with a hydroxyethyl farnesyl side group. This chain is Protoheme IX farnesyltransferase, found in Gloeobacter violaceus (strain ATCC 29082 / PCC 7421).